The primary structure comprises 874 residues: Probable inorganic carbon transporter subunit DabA (874 aa).

Positions 398, 400, 580, and 595 each coordinate Zn(2+).

This sequence belongs to the inorganic carbon transporter (TC 9.A.2) DabA family. In terms of assembly, forms a complex with DabB. Zn(2+) is required as a cofactor.

The protein resides in the cell membrane. Functionally, part of an energy-coupled inorganic carbon pump. This Bacillus cytotoxicus (strain DSM 22905 / CIP 110041 / 391-98 / NVH 391-98) protein is Probable inorganic carbon transporter subunit DabA.